An 894-amino-acid polypeptide reads, in one-letter code: Probable cytoplasmic aconitate hydratase (894 aa).

Substrate-binding positions include glutamine 87 and 207–209; that span reads DSH. The [4Fe-4S] cluster site is built by cysteine 438, cysteine 504, and cysteine 507. Substrate is bound by residues arginine 537, arginine 542, and 781–782; that span reads SR.

This sequence belongs to the aconitase/IPM isomerase family. Requires [4Fe-4S] cluster as cofactor.

It localises to the cytoplasm. It is found in the cytosol. The catalysed reaction is citrate = D-threo-isocitrate. Functionally, catalyzes the isomerization of citrate to isocitrate via cis-aconitate. This chain is Probable cytoplasmic aconitate hydratase (aco1), found in Dictyostelium discoideum (Social amoeba).